The primary structure comprises 1156 residues: Pesticidal crystal protein Cry9Aa (1156 aa).

A propeptide spans 1–23 (removed in mature form); the sequence is MNQNKHGIIGASNCGCASDDVAK.

This sequence belongs to the delta endotoxin family.

Promotes colloidosmotic lysis by binding to the midgut epithelial cells of insects. This protein is toxic to Galleria mellonella. This Bacillus thuringiensis subsp. galleriae protein is Pesticidal crystal protein Cry9Aa (cry9Aa).